Consider the following 133-residue polypeptide: Large ribosomal subunit protein uL11 (133 aa).

The protein belongs to the universal ribosomal protein uL11 family. In terms of assembly, part of the ribosomal stalk of the 50S ribosomal subunit. Interacts with L10 and the large rRNA to form the base of the stalk. L10 forms an elongated spine to which 2 L12 dimers bind in a sequential fashion forming a pentameric L10(L12)2(L12)2 complex. Post-translationally, one or more lysine residues are methylated.

Its function is as follows. Forms part of the ribosomal stalk which helps the ribosome interact with GTP-bound translation factors. This chain is Large ribosomal subunit protein uL11, found in Geobacillus stearothermophilus (Bacillus stearothermophilus).